A 275-amino-acid chain; its full sequence is Thiazole synthase (275 aa).

K108 (schiff-base intermediate with DXP) is an active-site residue. Residues G169, 196-197 (AG), and 218-219 (NT) contribute to the 1-deoxy-D-xylulose 5-phosphate site.

This sequence belongs to the ThiG family. Homotetramer. Forms heterodimers with either ThiH or ThiS.

Its subcellular location is the cytoplasm. It carries out the reaction [ThiS sulfur-carrier protein]-C-terminal-Gly-aminoethanethioate + 2-iminoacetate + 1-deoxy-D-xylulose 5-phosphate = [ThiS sulfur-carrier protein]-C-terminal Gly-Gly + 2-[(2R,5Z)-2-carboxy-4-methylthiazol-5(2H)-ylidene]ethyl phosphate + 2 H2O + H(+). The protein operates within cofactor biosynthesis; thiamine diphosphate biosynthesis. Functionally, catalyzes the rearrangement of 1-deoxy-D-xylulose 5-phosphate (DXP) to produce the thiazole phosphate moiety of thiamine. Sulfur is provided by the thiocarboxylate moiety of the carrier protein ThiS. In vitro, sulfur can be provided by H(2)S. The chain is Thiazole synthase from Ralstonia nicotianae (strain ATCC BAA-1114 / GMI1000) (Ralstonia solanacearum).